The chain runs to 2464 residues: Highly reducing polyketide synthase xilA (2464 aa).

A Ketosynthase family 3 (KS3) domain is found at 9-437 (HDPIALVGIG…GTNGHCIIDH (429 aa)). Catalysis depends on for beta-ketoacyl synthase activity residues C182, H318, and H360. Positions 461-487 (QNGINGTNGTNGTNGTNGTNGTNGTNG) are enriched in low complexity. The segment at 461–495 (QNGINGTNGTNGTNGTNGTNGTNGTNGHHNPKTEA) is disordered. Residues 589 to 911 (FIFTGQGAQW…LKRNEDAQRL (323 aa)) form the Malonyl-CoA:ACP transacylase (MAT) domain. The segment at 983-1121 (HDLLGSKVPG…GQIKIEVSTF (139 aa)) is N-terminal hotdog fold. The PKS/mFAS DH domain maps to 983-1286 (HDLLGSKVPG…FTSLNNEQES (304 aa)). The active-site Proton acceptor; for dehydratase activity is H1015. Residues 1133-1286 (GRLVDAQTWY…FTSLNNEQES (154 aa)) are C-terminal hotdog fold. Residue D1199 is the Proton donor; for dehydratase activity of the active site. The segment at 1282–1490 (NEQESTSTGD…TEPAHHSTIT (209 aa)) is methyltransferase (CMeT) domain. An Enoyl reductase (ER) domain is found at 1716–2028 (GILTSLYFKP…KGTHIGKMVI (313 aa)). The 180-residue stretch at 2052 to 2231 (ANYILVGGMS…ATTVSLGFIN (180 aa)) folds into the Ketoreductase (KR) domain. Positions 2383-2461 (ETVTFVTDAI…SIAQVIVEEA (79 aa)) constitute a Carrier domain. S2420 carries the post-translational modification O-(pantetheine 4'-phosphoryl)serine.

Pantetheine 4'-phosphate serves as cofactor.

Its pathway is secondary metabolite biosynthesis. In terms of biological role, highly reducing polyketide synthase; part of the gene cluster that mediates the biosynthesis of the 6-methyl-2-pyrone derivative xylariolide D. XilA produces the 5-alkyl-6-methyl-2-pyrone backbone called prexylariolide D via sequential condensations of 4 malonyl-CoA units with one acetyl-CoA starter unit. During the biosynthesis, the linear polyketide chain is branched by the addition of an acetyl unit as the origin of the methyl group at the 2-pyrone ring. Prexylariolide D is then hydroxylated at the side chain by xilC to form the final product, xylariolide D. The chain is Highly reducing polyketide synthase xilA from Penicillium rubens (strain ATCC 28089 / DSM 1075 / NRRL 1951 / Wisconsin 54-1255) (Penicillium chrysogenum).